We begin with the raw amino-acid sequence, 1415 residues long: DNA-directed RNA polymerase subunit beta' (1415 aa).

Residues C72, C74, C87, and C90 each coordinate Zn(2+). The Mg(2+) site is built by D463, D465, and D467. Zn(2+)-binding residues include C812, C886, C893, and C896.

It belongs to the RNA polymerase beta' chain family. The RNAP catalytic core consists of 2 alpha, 1 beta, 1 beta' and 1 omega subunit. When a sigma factor is associated with the core the holoenzyme is formed, which can initiate transcription. It depends on Mg(2+) as a cofactor. The cofactor is Zn(2+).

The catalysed reaction is RNA(n) + a ribonucleoside 5'-triphosphate = RNA(n+1) + diphosphate. Its function is as follows. DNA-dependent RNA polymerase catalyzes the transcription of DNA into RNA using the four ribonucleoside triphosphates as substrates. In Dinoroseobacter shibae (strain DSM 16493 / NCIMB 14021 / DFL 12), this protein is DNA-directed RNA polymerase subunit beta'.